We begin with the raw amino-acid sequence, 283 residues long: Transmembrane protein 119 (283 aa).

An N-terminal signal peptide occupies residues 1-25; sequence MVSAAAPSLLILLLLLLGSVPATDA. Topologically, residues 26-96 are extracellular; it reads RSVPLKATFL…IVDFFRQYVM (71 aa). O-linked (Xyl...) (chondroitin sulfate) serine glycosylation occurs at S41. A compositionally biased stretch (low complexity) spans 43–52; sequence EAEGSSASSP. The interval 43–76 is disordered; that stretch reads EAEGSSASSPSLPPPWTPALSPTSMGPQPITLGG. The chain crosses the membrane as a helical span at residues 97-117; that stretch reads LIAVVGSLAFLLMFIVCAAVI. Over 118 to 283 the chain is Cytoplasmic; that stretch reads TRQKQKASAY…CACSSVHPSV (166 aa). 2 disordered regions span residues 136–168 and 183–283; these read KYVD…ALDS and LKSP…HPSV. 2 stretches are compositionally biased toward basic and acidic residues: residues 153 to 164 and 198 to 213; these read VPDRAPDSRPEE and RMVE…KGSQ. The segment covering 238–264 has biased composition (low complexity); that stretch reads GVLEGAVVAGEGQGELEGSLLLAQEAQ. S272 is modified (phosphoserine).

Interacts with SMAD1, SMAD5 and RUNX2. As to expression, expressed in brain microglia (at protein level). Detected in urine (at protein level). Elevated expression levels seen in the brain of patients with Alzheimer disease. Expressed by osteoblast-like cells in bone tissues and follicular dendritic cells in lymphoid tissues.

The protein resides in the cell membrane. It localises to the cytoplasm. It is found in the endoplasmic reticulum membrane. The protein localises to the secreted. In terms of biological role, plays an important role in bone formation and normal bone mineralization. Promotes the differentiation of myoblasts into osteoblasts. May induce the commitment and differentiation of myoblasts into osteoblasts through an enhancement of BMP2 production and interaction with the BMP-RUNX2 pathway. Up-regulates the expression of ATF4, a transcription factor which plays a central role in osteoblast differentiation. Essential for normal spermatogenesis and late testicular differentiation. The chain is Transmembrane protein 119 (TMEM119) from Homo sapiens (Human).